The following is a 360-amino-acid chain: Homoserine O-acetyltransferase (360 aa).

The AB hydrolase-1 domain occupies 41-344; it reads NAILICHALT…DYGHDAFLVD (304 aa). The Nucleophile role is filled by S144. Substrate is bound at residue R213. Catalysis depends on residues D305 and H338. D339 contacts substrate.

Belongs to the AB hydrolase superfamily. MetX family. In terms of assembly, homodimer.

Its subcellular location is the cytoplasm. The enzyme catalyses L-homoserine + acetyl-CoA = O-acetyl-L-homoserine + CoA. It participates in amino-acid biosynthesis; L-methionine biosynthesis via de novo pathway; O-acetyl-L-homoserine from L-homoserine: step 1/1. Its function is as follows. Transfers an acetyl group from acetyl-CoA to L-homoserine, forming acetyl-L-homoserine. This chain is Homoserine O-acetyltransferase, found in Pasteurella multocida (strain Pm70).